A 273-amino-acid chain; its full sequence is R-spondin-3 (273 aa).

An N-terminal signal peptide occupies residues 1–21; it reads MHLRLISWFFIILNFMEYIGS. FU repeat units lie at residues 35–86 and 92–135; these read PNVS…GYYG and INKC…GLEA. Residue N36 is glycosylated (N-linked (GlcNAc...) asparagine). 11 disulfides stabilise this stretch: C41–C48, C45–C54, C57–C76, C80–C95, C98–C105, C102–C111, C114–C125, C129–C142, C148–C190, C159–C166, and C199–C206. The TSP type-1 domain occupies 147-207; sequence HCEASEWSPW…KCTVQRKKCP (61 aa). The tract at residues 201 to 273 is disordered; it reads VQRKKCPKGE…QKSVSVSTVH (73 aa). Over residues 213 to 223 the composition is skewed to basic residues; it reads RKGRERKRKKP. The segment covering 224–252 has biased composition (basic and acidic residues); that stretch reads NKEESKDAIPDNKGLEPSRETPEQRENKQ.

Belongs to the R-spondin family. Interacts with the extracellular domain of FZD8 and LRP6. It however does not form a ternary complex with FZD8 and LRP6. Interacts with WNT1. Binds heparin. Interacts with LGR4, LGR5 and LGR6.

Its subcellular location is the secreted. Activator of the canonical Wnt signaling pathway by acting as a ligand for LGR4-6 receptors, which acts as a key regulator of angiogenesis. Upon binding to LGR4-6 (LGR4, LGR5 or LGR6), LGR4-6 associate with phosphorylated LRP6 and frizzled receptors that are activated by extracellular Wnt receptors, triggering the canonical Wnt signaling pathway to increase expression of target genes. Also regulates the canonical Wnt/beta-catenin-dependent pathway and non-canonical Wnt signaling by acting as an inhibitor of ZNRF3, an important regulator of the Wnt signaling pathway. Acts as a ligand for frizzled FZD8 and LRP6. May negatively regulate the TGF-beta pathway. Acts as a key regulator of angiogenesis by controlling vascular stability and pruning: acts by activating the non-canonical Wnt signaling pathway in endothelial cells. Can also amplify Wnt signaling pathway independently of LGR4-6 receptors, possibly by acting as a direct antagonistic ligand to RNF43 and ZNRF3. The protein is R-spondin-3 (RSPO3) of Bos taurus (Bovine).